Consider the following 374-residue polypeptide: Putative glutamate--cysteine ligase 2 (374 aa).

The protein belongs to the glutamate--cysteine ligase type 2 family. YbdK subfamily.

The enzyme catalyses L-cysteine + L-glutamate + ATP = gamma-L-glutamyl-L-cysteine + ADP + phosphate + H(+). Functionally, ATP-dependent carboxylate-amine ligase which exhibits weak glutamate--cysteine ligase activity. In Laribacter hongkongensis (strain HLHK9), this protein is Putative glutamate--cysteine ligase 2.